Consider the following 495-residue polypeptide: uncharacterized protein (495 aa).

One can recognise a TRAM domain in the interval Ser16–Glu74. [4Fe-4S] cluster-binding residues include Cys88, Cys94, Cys97, and Cys175. Residues Gln299, Tyr328, Glu349, and Asn397 each contribute to the S-adenosyl-L-methionine site. Cys424 functions as the Nucleophile in the catalytic mechanism. The segment covering Asp472–Arg483 has biased composition (basic and acidic residues). The disordered stretch occupies residues Asp472–Val495. The span at Pro484–Val495 shows a compositional bias: basic residues.

Belongs to the class I-like SAM-binding methyltransferase superfamily. RNA M5U methyltransferase family.

This is an uncharacterized protein from Geobacter sulfurreducens (strain ATCC 51573 / DSM 12127 / PCA).